The chain runs to 229 residues: Large ribosomal subunit protein uL1 (229 aa).

Belongs to the universal ribosomal protein uL1 family. In terms of assembly, part of the 50S ribosomal subunit.

Functionally, binds directly to 23S rRNA. The L1 stalk is quite mobile in the ribosome, and is involved in E site tRNA release. Protein L1 is also a translational repressor protein, it controls the translation of the L11 operon by binding to its mRNA. The protein is Large ribosomal subunit protein uL1 of Flavobacterium johnsoniae (strain ATCC 17061 / DSM 2064 / JCM 8514 / BCRC 14874 / CCUG 350202 / NBRC 14942 / NCIMB 11054 / UW101) (Cytophaga johnsonae).